The chain runs to 338 residues: Lipoate-protein ligase A (338 aa).

A BPL/LPL catalytic domain is found at 29–216 (PATQRVLFLW…AFFAHYGERV (188 aa)). Residues arginine 71, 76–79 (GAVF), and lysine 134 contribute to the ATP site. Lysine 134 is a binding site for (R)-lipoate.

The protein belongs to the LplA family. In terms of assembly, monomer.

It localises to the cytoplasm. It carries out the reaction L-lysyl-[lipoyl-carrier protein] + (R)-lipoate + ATP = N(6)-[(R)-lipoyl]-L-lysyl-[lipoyl-carrier protein] + AMP + diphosphate + H(+). The protein operates within protein modification; protein lipoylation via exogenous pathway; protein N(6)-(lipoyl)lysine from lipoate: step 1/2. It participates in protein modification; protein lipoylation via exogenous pathway; protein N(6)-(lipoyl)lysine from lipoate: step 2/2. Catalyzes both the ATP-dependent activation of exogenously supplied lipoate to lipoyl-AMP and the transfer of the activated lipoyl onto the lipoyl domains of lipoate-dependent enzymes. This Salmonella agona (strain SL483) protein is Lipoate-protein ligase A.